A 155-amino-acid polypeptide reads, in one-letter code: SsrA-binding protein (155 aa).

The segment covering 135-147 (TIKRRDQERDIKK) has biased composition (basic and acidic residues). The tract at residues 135–155 (TIKRRDQERDIKKQMKHYNAR) is disordered.

This sequence belongs to the SmpB family.

It is found in the cytoplasm. Required for rescue of stalled ribosomes mediated by trans-translation. Binds to transfer-messenger RNA (tmRNA), required for stable association of tmRNA with ribosomes. tmRNA and SmpB together mimic tRNA shape, replacing the anticodon stem-loop with SmpB. tmRNA is encoded by the ssrA gene; the 2 termini fold to resemble tRNA(Ala) and it encodes a 'tag peptide', a short internal open reading frame. During trans-translation Ala-aminoacylated tmRNA acts like a tRNA, entering the A-site of stalled ribosomes, displacing the stalled mRNA. The ribosome then switches to translate the ORF on the tmRNA; the nascent peptide is terminated with the 'tag peptide' encoded by the tmRNA and targeted for degradation. The ribosome is freed to recommence translation, which seems to be the essential function of trans-translation. The polypeptide is SsrA-binding protein (Streptococcus pyogenes serotype M12 (strain MGAS2096)).